Here is a 433-residue protein sequence, read N- to C-terminus: O-methyltransferase hasC (433 aa).

S-adenosyl-L-methionine-binding positions include glutamate 265 and 293–295 (GDF). Catalysis depends on histidine 313, which acts as the Proton acceptor. Residues 413–433 (SPRANGNGNSAGGLEWESELM) are disordered.

This sequence belongs to the class I-like SAM-binding methyltransferase superfamily. Cation-independent O-methyltransferase family. COMT subfamily.

It functions in the pathway secondary metabolite biosynthesis. In terms of biological role, O-methyltransferase; part of the gene cluster that mediates the biosynthesis of hexadehydro-astechrome (HAS), a tryptophan-derived iron(III)-complex that acts as a virulence factor in infected mice. Within the pathway, hasC, with the cytochrome P450 monooxygenase hasH and the FAD-linked oxidoreductase hasG, convert the hasE-prenylated Trp-Ala-dipeptide into an O-methylated diketopiperazine that is then released from the hasD NRPS. The HAS biosynthesis begins with the synthesis of a tethered Trp-Ala dipeptide by the NRPS hasD. The 7-dimethylallyltryptophan synthase hasE then catalyzes the prenylation of the hasD-tethered tryptophan or the resulting tethered Trp-Ala dipeptide at the C-7 position of the indole moiety. HAS biosynthesis continues via tethered intermediates with the succesive actions of the cytochrome P450 monooxygenase hasH, the O-methyltransferase hasC, and the FAD-linked oxidoreductase hasG. The resulting O-methylated diketopiperazine is then released from hasD. Finally, three O-methylated diketopiperazine molecules assemble in a trimeric complex with Fe(III) to produce hexadehydro-astechrome. This Aspergillus fumigatus (strain CBS 144.89 / FGSC A1163 / CEA10) (Neosartorya fumigata) protein is O-methyltransferase hasC.